A 459-amino-acid polypeptide reads, in one-letter code: Pentatricopeptide repeat-containing protein At5g18390, mitochondrial (459 aa).

The N-terminal 7 residues, 1–7 (MLLLRRY), are a transit peptide targeting the mitochondrion. PPR repeat units follow at residues 110-144 (TSME…SLDI), 145-175 (SGET…VPKT), 181-215 (TVDV…GLKP), 216-250 (DKRT…GFNP), 251-285 (PARG…GFVP), 286-320 (DIQT…GLCV), 321-355 (DIDT…GHKP), 356-390 (FPSL…AHPP), and 391-425 (NRPV…GLVP).

This sequence belongs to the PPR family. P subfamily.

The protein resides in the mitochondrion. This chain is Pentatricopeptide repeat-containing protein At5g18390, mitochondrial, found in Arabidopsis thaliana (Mouse-ear cress).